A 592-amino-acid chain; its full sequence is Arginine--tRNA ligase (592 aa).

The 'HIGH' region signature appears at 129 to 139 (ANPTGPLHVGH).

Belongs to the class-I aminoacyl-tRNA synthetase family. In terms of assembly, monomer.

It is found in the cytoplasm. It catalyses the reaction tRNA(Arg) + L-arginine + ATP = L-arginyl-tRNA(Arg) + AMP + diphosphate. This is Arginine--tRNA ligase from Dichelobacter nodosus (strain VCS1703A).